The primary structure comprises 457 residues: Zinc finger protein ZPR1 (457 aa).

Polar residues predominate over residues methionine 1 to proline 13. A disordered region spans residues methionine 1–proline 21. 2 C4-type zinc fingers span residues cysteine 43–cysteine 75 and cysteine 261–cysteine 293. The segment at valine 414–alanine 457 is disordered. 2 stretches are compositionally biased toward basic and acidic residues: residues aspartate 425–glutamate 438 and methionine 448–alanine 457.

It belongs to the ZPR1 family.

Functionally, might mediate EGFR and FGFR signal transduction cascades required for lumen formation in tracheal cells. The chain is Zinc finger protein ZPR1 from Drosophila melanogaster (Fruit fly).